The chain runs to 489 residues: Mitochondrial-processing peptidase subunit beta (489 aa).

Residues 1 to 45 (MAAAAARVVLLPAARRRLWGFSESLLIRGAAGRSSYFGENRLRST) constitute a mitochondrion transit peptide. Residue His101 participates in Zn(2+) binding. Residue Glu104 is the Proton acceptor of the active site. 2 residues coordinate Zn(2+): His105 and Glu181.

Belongs to the peptidase M16 family. As to quaternary structure, heterodimer of PMPCA (alpha) and PMPCB (beta) subunits, forming the mitochondrial processing protease (MPP) in which PMPCA is involved in substrate recognition and binding and PMPCB is the catalytic subunit. Zn(2+) serves as cofactor.

The protein resides in the mitochondrion matrix. The catalysed reaction is Release of N-terminal transit peptides from precursor proteins imported into the mitochondrion, typically with Arg in position P2.. Binding to PMPCA is required for catalytic activity. Its function is as follows. Catalytic subunit of the essential mitochondrial processing protease (MPP), which cleaves the mitochondrial sequence off newly imported precursors proteins. Preferentially, cleaves after an arginine at position P2. Required for PINK1 turnover by coupling PINK1 mitochondrial import and cleavage, which results in subsequent PINK1 proteolysis. The chain is Mitochondrial-processing peptidase subunit beta (PMPCB) from Pongo abelii (Sumatran orangutan).